The sequence spans 2999 residues: TPR and ankyrin repeat-containing protein 1 (2999 aa).

Residues 1 to 87 (MASTTAGRRW…QPRGSTDSAC (87 aa)) are disordered. The segment covering 19 to 36 (RGPTPRSRAPGAKLSAPE) has biased composition (low complexity). 2 TPR repeats span residues 144 to 177 (AMLLCNKSNAFYNLGKWNEAFLAAKECLQWDPTY) and 179 to 211 (KGYYRAGYSLLHLLQPYEAARMFFEGLRLLQRS). 6 ANK repeats span residues 297–327 (EKYVFIGFYEKLEQVPKLVQWLVSIGANIET), 328–361 (IGPNPLHALMRLCIQARESQLFRWVMDQKPEWKE), 369–405 (AGCTVLHVAAAHFPGYTSRRQTEDVQMLLSFGADPTL), 538–567 (SQDRPLLMCLRHEDFDLAFLLLTKGADPRS), 572–593 (EGDTPLHAALHIFLDINADIGF), and 621–654 (NGNTLMHLLFQKGMLKRTKKLIDLLVKFDINFNL). Disordered stretches follow at residues 684 to 722 (RRKNRQDPAAHLGRLSRSSAPGHTSQLKSQTSFKSLPCG), 773 to 831 (MPLP…GASQ), 1151 to 1211 (LEVE…GCVP), and 1318 to 1344 (WEEDDEEVEADGNYNEEEKATETQTGD). 2 stretches are compositionally biased toward polar residues: residues 699–717 (SRSSAPGHTSQLKSQTSFK) and 801–815 (TQRMGSSGCSGNNPV). Basic and acidic residues predominate over residues 1151–1164 (LEVEPGKEGPGREE). The span at 1318 to 1327 (WEEDDEEVEA) shows a compositional bias: acidic residues. 2 TPR repeats span residues 1772-1805 (PYEWIIQGDYYAKHQCWKVAAKCYQKGDALEKEK) and 1866-1899 (LGKIRDAAYFYKRSQCFQDAFRCFEQIQEFDLAL).

As to expression, expressed only in the brain. Detected in the hippocampus, hypothalamus and cingulate gyrus.

The protein is TPR and ankyrin repeat-containing protein 1 (Trank1) of Mus musculus (Mouse).